The following is a 930-amino-acid chain: Dual serine/threonine and tyrosine protein kinase (930 aa).

Residues 1 to 14 (MEGDGVPWGSEPVS) are compositionally biased toward low complexity. Positions 1–22 (MEGDGVPWGSEPVSGPGPGGGG) are disordered. Coiled coils occupy residues 190–216 (EEDL…MHHA) and 396–432 (RKKE…KEEL). One can recognise a Protein kinase domain in the interval 653-907 (PKLGQELGRG…PLLGIVQPML (255 aa)). ATP-binding positions include 659 to 667 (LGRGQYGVV) and lysine 682. Residue aspartate 778 is the Proton acceptor of the active site.

Belongs to the protein kinase superfamily. Ser/Thr protein kinase family.

Its subcellular location is the cytoplasm. The protein resides in the cell membrane. It localises to the apical cell membrane. It is found in the basolateral cell membrane. The protein localises to the cell junction. It carries out the reaction L-seryl-[protein] + ATP = O-phospho-L-seryl-[protein] + ADP + H(+). The enzyme catalyses L-threonyl-[protein] + ATP = O-phospho-L-threonyl-[protein] + ADP + H(+). It catalyses the reaction L-tyrosyl-[protein] + ATP = O-phospho-L-tyrosyl-[protein] + ADP + H(+). In terms of biological role, acts as a positive regulator of ERK phosphorylation downstream of fibroblast growth factor-receptor activation. Involved in the regulation of both caspase-dependent apoptosis and caspase-independent cell death. In the skin, it plays a predominant role in suppressing caspase-dependent apoptosis in response to UV stress in a range of dermal cell types. The sequence is that of Dual serine/threonine and tyrosine protein kinase (DSTYK) from Pan troglodytes (Chimpanzee).